A 648-amino-acid chain; its full sequence is DNA ligase (648 aa).

Residues 30–34 and 79–80 each bind NAD(+); these read DEEYD and SQ. The active-site N6-AMP-lysine intermediate is Lys-110. Arg-131, Glu-165, Lys-280, and Lys-304 together coordinate NAD(+). The Zn(2+) site is built by Cys-398, Cys-401, Cys-414, and Cys-419. The BRCT domain maps to 573–648; that stretch reads VSENPFKNKT…LTEEEMNSLF (76 aa).

The protein belongs to the NAD-dependent DNA ligase family. LigA subfamily. The cofactor is Mg(2+). Requires Mn(2+) as cofactor.

The enzyme catalyses NAD(+) + (deoxyribonucleotide)n-3'-hydroxyl + 5'-phospho-(deoxyribonucleotide)m = (deoxyribonucleotide)n+m + AMP + beta-nicotinamide D-nucleotide.. Its function is as follows. DNA ligase that catalyzes the formation of phosphodiester linkages between 5'-phosphoryl and 3'-hydroxyl groups in double-stranded DNA using NAD as a coenzyme and as the energy source for the reaction. It is essential for DNA replication and repair of damaged DNA. The chain is DNA ligase from Aliarcobacter butzleri (strain RM4018) (Arcobacter butzleri).